Reading from the N-terminus, the 1138-residue chain is Solute carrier family 12 member 5 (1138 aa).

2 disordered regions span residues 1–62 (MSRR…KGRE) and 96–116 (QGSR…KPVQ). Residues 1 to 98 (MSRRFTVTSL…ANYTNLPQGS (98 aa)) lie on the Cytoplasmic side of the membrane. Residues 21 to 45 (PESRRHSVADPRRLPREDVKGDGNP) show a composition bias toward basic and acidic residues. A compositionally biased stretch (polar residues) spans 46 to 55 (KESSPFINST). At Thr57 the chain carries Phosphothreonine. A compositionally biased stretch (basic and acidic residues) spans 98–111 (SREHEEAENNEGGK). Residues 99–120 (REHEEAENNEGGKKKPVQAPRM) traverse the membrane as a discontinuously helical segment. Lys113 contacts K(+). At 121–129 (GTFMGVYLP) the chain is on the extracellular side. The helical transmembrane segment at 130 to 151 (CLQNIFGVILFLRLTWVVGIAG) threads the bilayer. Over 152 to 174 (IMESFCMVFICCSCTMLTAISMS) the chain is Cytoplasmic. Residues 175-203 (AIATNGVVPAGGSYYMISRSLGPEFGGAV) form a helical membrane-spanning segment. Ala184 serves as a coordination point for chloride. Residues 204-229 (GLCFYLGTTFAGAMYILGTIEILLAY) are Extracellular-facing. 2 helical membrane-spanning segments follow: residues 230–250 (LFPA…AAML) and 251–276 (NNMR…KYVN). Topologically, residues 277–402 (KFALVFLGCV…ERRGMPSVGL (126 aa)) are extracellular. A disulfide bridge connects residues Cys310 and Cys325. 4 N-linked (GlcNAc...) asparagine glycosylation sites follow: Asn314, Asn333, Asn351, and Asn362. Residues Cys345 and Cys354 are joined by a disulfide bond. Residues 403 to 420 (ADGTPVDMDHPYVFSDMT) form a helical membrane-spanning segment. Position 410 (Met410) interacts with K(+). 2 residues coordinate chloride: Tyr414 and Val415. Over 421–429 (SYFTLLVGI) the chain is Cytoplasmic. A helical transmembrane segment spans residues 430-453 (YFPSVTGIMAGSNRSGDLRDAQKS). Residue Asp446 participates in K(+) binding. The Extracellular segment spans residues 454–485 (IPTGTILAIATTSAVYISSVVLFGACIEGVVL). The helical transmembrane segment at 486–513 (RDKFGEAVNGNLVVGTLAWPSPWVIVIG) threads the bilayer. The Cytoplasmic portion of the chain corresponds to 514–534 (SFFSTCGAGLQSLTGAPRLLQ). 2 helical membrane passes run 535–555 (AISR…KANG) and 556–578 (EPTW…ASLD). Position 569 (Glu569) interacts with chloride. The Cytoplasmic segment spans residues 579 to 592 (EVAPILSMFFLMCY). 2 consecutive transmembrane segments (helical) span residues 593–615 (MFVN…PRFR) and 616–632 (YYHW…CLAL). The Cytoplasmic segment spans residues 633–1138 (MFICSWYYAL…GGREVITIYS (506 aa)). Residues 667-681 (GIRGLSLSAARYALL) are scissor helix. Thr929 carries the phosphothreonine; by OXSR1 and STK39 modification. The segment at 943–1051 (HLTKNERERE…GPSPVSSEGI (109 aa)) is disordered. Over residues 945–962 (TKNEREREIQSITDESRG) the composition is skewed to basic and acidic residues. Residues 982–994 (TACDNEEKPEEEV) show a composition bias toward acidic residues. Over residues 1001–1012 (SAPSCPSSSPSP) the composition is skewed to low complexity. Over residues 1019-1041 (ERETDPEVHLTWTKDKSVAEKNK) the composition is skewed to basic and acidic residues. Thr1029 is modified (phosphothreonine; by OXSR1 and STK39). 3 positions are modified to phosphoserine: Ser1044, Ser1047, and Ser1048.

This sequence belongs to the SLC12A transporter family. K/Cl co-transporter subfamily. Homodimer; adopts a domain-swap conformation at the scissor helices connecting the transmembrane domain and C-terminal domain. Heterodimer with K-Cl cotransporters SLC12A6 and SLC12A7. Interacts with AP2A1. Post-translationally, phosphorylated at Thr-929 and Thr-1029 by OXSR1/OSR1 and STK39/SPAK downstream of WNK kinases (WNK1, WNK2, WNK3 or WNK4), inhibiting the potassium-chloride cotransport activity. In terms of tissue distribution, expressed in brainstem, spinal cord and olfactory bulb of 17 dpc embryos. Expressed in all parts of the brain and spinal cord in postnatal day 14 mice. As to expression, expressed in brainstem and spinal cord of 17 dpc embryos. Expressed in all parts of the brain and spinal cord in postnatal day 14 mice.

It localises to the cell membrane. The protein localises to the cell projection. The protein resides in the dendrite. It catalyses the reaction K(+)(in) + chloride(in) = K(+)(out) + chloride(out). With respect to regulation, inhibited following phosphorylation by OXSR1/OSR1 and STK39/SPAK: phosphorylation takes place downstream of WNK kinases (WNK1, WNK2, WNK3 or WNK4) in response to hyperosmotic stress and subsequent cell shrinkage. Its function is as follows. Mediates electroneutral potassium-chloride cotransport in mature neurons and is required for neuronal Cl(-) homeostasis. As major extruder of intracellular chloride, it establishes the low neuronal Cl(-) levels required for chloride influx after binding of GABA-A and glycine to their receptors, with subsequent hyperpolarization and neuronal inhibition. Involved in the regulation of dendritic spine formation and maturation. The protein is Solute carrier family 12 member 5 (Slc12a5) of Mus musculus (Mouse).